A 472-amino-acid polypeptide reads, in one-letter code: Glutamate--tRNA ligase (472 aa).

A 'HIGH' region motif is present at residues 9-19 (PSPTGYLHVGG). Residues C98, C100, C125, and H127 each contribute to the Zn(2+) site. The 'KMSKS' region motif lies at 237 to 241 (KLSKR). An ATP-binding site is contributed by K240.

It belongs to the class-I aminoacyl-tRNA synthetase family. Glutamate--tRNA ligase type 1 subfamily. Monomer. Requires Zn(2+) as cofactor.

It localises to the cytoplasm. It catalyses the reaction tRNA(Glu) + L-glutamate + ATP = L-glutamyl-tRNA(Glu) + AMP + diphosphate. Its function is as follows. Catalyzes the attachment of glutamate to tRNA(Glu) in a two-step reaction: glutamate is first activated by ATP to form Glu-AMP and then transferred to the acceptor end of tRNA(Glu). This is Glutamate--tRNA ligase from Klebsiella pneumoniae subsp. pneumoniae (strain ATCC 700721 / MGH 78578).